We begin with the raw amino-acid sequence, 276 residues long: Ribosomal RNA small subunit methyltransferase A (276 aa).

Asparagine 27, leucine 29, glycine 54, glutamate 75, aspartate 101, and asparagine 123 together coordinate S-adenosyl-L-methionine.

Belongs to the class I-like SAM-binding methyltransferase superfamily. rRNA adenine N(6)-methyltransferase family. RsmA subfamily.

It is found in the cytoplasm. It catalyses the reaction adenosine(1518)/adenosine(1519) in 16S rRNA + 4 S-adenosyl-L-methionine = N(6)-dimethyladenosine(1518)/N(6)-dimethyladenosine(1519) in 16S rRNA + 4 S-adenosyl-L-homocysteine + 4 H(+). Its function is as follows. Specifically dimethylates two adjacent adenosines (A1518 and A1519) in the loop of a conserved hairpin near the 3'-end of 16S rRNA in the 30S particle. May play a critical role in biogenesis of 30S subunits. The chain is Ribosomal RNA small subunit methyltransferase A from Bartonella bacilliformis (strain ATCC 35685 / KC583 / Herrer 020/F12,63).